The chain runs to 319 residues: MANQLRERHQSLKKKYRELIDGDPSLPPEKRKQANLAQLLRDSQDRNKHLGEEIKELQQRLGEVQGDNKLLRMTIAKQRLGDEEIGVRHFAAHEREDLVQQLERAKEQIESLEHDLQASVDELQDVKEERSSYQDKVERLNQELNHILSGHENRIIDVDALCMENRYLQERLKQLHEEVNLLKSNIAKYKNALERRKNSKGQNKSSSSALTGVLSAKQVQDLLSEDHGCSLPATPQSISDLKSLATALLETIHEKNMVIQHQRQTNKILGNRVAELEKKLRTLEVSGLWSLPGLSYNVSIGFGSMFFLKYLCLWLIAVH.

Coiled-coil stretches lie at residues 1-199 and 259-286; these read MANQ…RKNS and IQHQ…LEVS. A helical transmembrane segment spans residues 298–318; sequence VSIGFGSMFFLKYLCLWLIAV.

This sequence belongs to the CCDC149 family.

It localises to the membrane. This is Coiled-coil domain-containing protein 149 (CCDC149) from Bos taurus (Bovine).